We begin with the raw amino-acid sequence, 30 residues long: Unknown protein from spot 365 of 2D-PAGE of etiolated coleoptile (30 aa).

Belongs to the zinc-containing alcohol dehydrogenase family.

The protein is Unknown protein from spot 365 of 2D-PAGE of etiolated coleoptile of Zea mays (Maize).